Here is a 407-residue protein sequence, read N- to C-terminus: Inhibin beta B chain (407 aa).

A signal peptide spans 1 to 28 (MDGLPGRALGAACLLLLAAGWLGPEAWG). The interval 26-62 (AWGSPTPPPTPAAPPPPPPPGSPGGSQDTCTSCGGFR) is disordered. Positions 29–292 (SPTPPPTPAA…GDSRHRIRKR (264 aa)) are excised as a propeptide. Over residues 30-47 (PTPPPTPAAPPPPPPPGS) the composition is skewed to pro residues. N-linked (GlcNAc...) asparagine glycosylation occurs at asparagine 93. 4 disulfides stabilise this stretch: cysteine 296–cysteine 304, cysteine 303–cysteine 372, cysteine 332–cysteine 404, and cysteine 336–cysteine 406.

It belongs to the TGF-beta family. As to quaternary structure, dimeric, linked by one or more disulfide bonds. Inhibin B is a dimer of alpha and beta-B. Activin B is a homodimer of beta-B. Activin AB is a dimer of beta-A and beta-B. Interacts with FST and FSTL3. Activin B interacts with BMPR2.

The protein localises to the secreted. Inhibins and activins inhibit and activate, respectively, the secretion of follitropin by the pituitary gland. Inhibins/activins are involved in regulating a number of diverse functions such as hypothalamic and pituitary hormone secretion, gonadal hormone secretion, germ cell development and maturation, erythroid differentiation, insulin secretion, nerve cell survival, embryonic axial development or bone growth, depending on their subunit composition. Inhibins appear to oppose the functions of activins. In terms of biological role, activin B is a dimer of alpha and beta-B that plays a role in several essential biological processes including embryonic development, stem cell maintenance and differentiation, haematopoiesis, cell proliferation and wound healing. Signals through type I receptor ACVR1C, abundantly expressed in pancreatic beta cells, and type II receptors like ACVR2A or BMPR2. Upon ligand binding, these receptors phosphorylate intracellular signaling mediators SMAD2 and SMAD3, which form a complex with SMAD4, translocate to the nucleus, and regulate gene expression. Plays a crucial role in the induction of hepcidin by inflammation through activation of ACVR1C and subsequent phosphorylation of SMAD1/5/8. Regulates adipocyte lipid metabolism by decreasing non-esterified fatty acids and glycerol release and increases intracellular triglyceride content. Stimulates wound healing by promoting cell migration and hair follicle regeneration through the JNK and ERK signaling pathways downstream of RHOA. Functionally, inhibin B is a dimer of alpha and beta-B that plays a crucial role in the regulation of the reproductive system by inhibiting the secretion of follicle-stimulating hormone (FSH) from the anterior pituitary gland. Thereby, maintains reproductive homeostasis in both males and females. Acts as a more potent suppressor of FSH release than inhibin A. Functions as competitive receptor antagonist binding activin type II receptors with high affinity in the presence of the TGF-beta type III coreceptor/TGFBR3L. This chain is Inhibin beta B chain (INHBB), found in Homo sapiens (Human).